We begin with the raw amino-acid sequence, 159 residues long: Transmembrane protein 42 (159 aa).

The next 4 membrane-spanning stretches (helical) occupy residues 37-57, 68-88, 100-120, and 124-144; these read FWGVFNCLCAGAFGALAAASA, GFCVLGIIMMATTNSLMWTFF, IASVTVTFSNILNSAFLGFVL, and CQEVLWWGGVFLILCGLTLIH.

The protein localises to the membrane. This chain is Transmembrane protein 42 (TMEM42), found in Bos taurus (Bovine).